The sequence spans 350 residues: Biotin synthase (350 aa).

The Radical SAM core domain maps to Arg54–Ser278. [4Fe-4S] cluster contacts are provided by Cys69, Cys73, and Cys76. [2Fe-2S] cluster is bound by residues Cys113, Cys144, Cys204, and Arg276.

Belongs to the radical SAM superfamily. Biotin synthase family. Homodimer. Requires [4Fe-4S] cluster as cofactor. The cofactor is [2Fe-2S] cluster.

It carries out the reaction (4R,5S)-dethiobiotin + (sulfur carrier)-SH + 2 reduced [2Fe-2S]-[ferredoxin] + 2 S-adenosyl-L-methionine = (sulfur carrier)-H + biotin + 2 5'-deoxyadenosine + 2 L-methionine + 2 oxidized [2Fe-2S]-[ferredoxin]. It participates in cofactor biosynthesis; biotin biosynthesis; biotin from 7,8-diaminononanoate: step 2/2. Functionally, catalyzes the conversion of dethiobiotin (DTB) to biotin by the insertion of a sulfur atom into dethiobiotin via a radical-based mechanism. The chain is Biotin synthase from Neisseria meningitidis serogroup C (strain 053442).